A 183-amino-acid chain; its full sequence is Ferritin heavy chain (183 aa).

An N-acetylmethionine modification is found at Met1. An N-acetylthreonine; in Ferritin heavy chain, N-terminally processed modification is found at Thr2. The region spanning 11–160 (QNYHQDSEAA…DHVTNLRKMG (150 aa)) is the Ferritin-like diiron domain. 5 residues coordinate Fe cation: Glu28, Glu63, His66, Glu108, and Gln142. Phosphoserine is present on residues Ser179 and Ser183.

This sequence belongs to the ferritin family. As to quaternary structure, oligomer of 24 subunits. There are two types of subunits: L (light) chain and H (heavy) chain. The major chain can be light or heavy, depending on the species and tissue type. The functional molecule forms a roughly spherical shell with a diameter of 12 nm and contains a central cavity into which the insoluble mineral iron core is deposited. Interacts with NCOA4; NCOA4 promotes targeting of the iron-binding ferritin complex to autolysosomes following starvation or iron depletion.

The protein resides in the cytoplasm. It is found in the lysosome. It localises to the cytoplasmic vesicle. The protein localises to the autophagosome. The enzyme catalyses 4 Fe(2+) + O2 + 4 H(+) = 4 Fe(3+) + 2 H2O. Functionally, stores iron in a soluble, non-toxic, readily available form. Important for iron homeostasis. Has ferroxidase activity. Iron is taken up in the ferrous form and deposited as ferric hydroxides after oxidation. Also plays a role in delivery of iron to cells. Mediates iron uptake in capsule cells of the developing kidney. Delivery to lysosomes is mediated by the cargo receptor NCOA4 for autophagic degradation and release of iron. This chain is Ferritin heavy chain (FTH1), found in Felis catus (Cat).